Here is a 236-residue protein sequence, read N- to C-terminus: uncharacterized protein (236 aa).

The protein belongs to the RHS family.

This is an uncharacterized protein from Escherichia coli (strain K12).